Reading from the N-terminus, the 145-residue chain is Acidic phospholipase A2 (145 aa).

A signal peptide spans 1–19 (MNPAHLLILSAVCVSLLGA). The propeptide occupies 20–27 (ANVPPQHL). Intrachain disulfides connect Cys-38–Cys-97, Cys-52–Cys-144, Cys-54–Cys-70, Cys-69–Cys-125, Cys-76–Cys-118, Cys-86–Cys-111, and Cys-104–Cys-116. Ca(2+) contacts are provided by Tyr-53, Gly-55, and Gly-57. His-73 is a catalytic residue. Asp-74 contacts Ca(2+). Residue Asp-119 is part of the active site.

It belongs to the phospholipase A2 family. Group I subfamily. D49 sub-subfamily. Ca(2+) is required as a cofactor. As to expression, expressed by the venom gland.

It is found in the secreted. It carries out the reaction a 1,2-diacyl-sn-glycero-3-phosphocholine + H2O = a 1-acyl-sn-glycero-3-phosphocholine + a fatty acid + H(+). Functionally, PLA2 catalyzes the calcium-dependent hydrolysis of the 2-acyl groups in 3-sn-phosphoglycerides. In Bungarus multicinctus (Many-banded krait), this protein is Acidic phospholipase A2.